A 1616-amino-acid chain; its full sequence is Replicase large subunit (1616 aa).

Positions 50–466 (FSKSINEEQT…LITKLSMLKD (417 aa)) are methyltransferase. The region spanning 72 to 281 (TFYNTQLAVH…HSYSNLLKYV (210 aa)) is the Alphavirus-like MT domain. Residues 800-962 (MVYSDMAKLR…KLIVDETEKR (163 aa)) form the (+)RNA virus helicase ATP-binding domain. Residues 828–1084 (TLVDGVPGCG…RHTRCFKYYT (257 aa)) are helicase. 832-839 (GVPGCGKT) provides a ligand contact to ATP. The 153-residue stretch at 963–1115 (RTTLRCPVDV…DVYMVDSVSA (153 aa)) folds into the (+)RNA virus helicase C-terminal domain. A RdRp catalytic domain is found at 1385 to 1498 (MEVLELDVSK…YLPKGCELPN (114 aa)).

Belongs to the ssRNA positive-strand viruses RNA-directed RNA polymerase family. In terms of assembly, heterodimer of a large and a small subunit.

It catalyses the reaction RNA(n) + a ribonucleoside 5'-triphosphate = RNA(n+1) + diphosphate. The enzyme catalyses ATP + H2O = ADP + phosphate + H(+). In terms of biological role, is an RNA-dependent RNA polymerase active in viral RNA replication. Is a methyltransferase active in RNA capping and an RNA helicase. Methyltransferase displays a cytoplasmic capping enzyme activity. This function is necessary since all viral RNAs are synthesized in the cytoplasm, and host capping enzymes are restricted to the nucleus. Helicase region probably exhibits NTPase and RNA unwinding activities (Potential). It also acts as a suppressor of RNA-mediated gene silencing, also known as post-transcriptional gene silencing (PTGS), a mechanism of plant viral defense that limits the accumulation of viral RNAs. May mediate silencing suppression through either inhibition of HEN1-mediated siRNA or siRNA demethylation. This Tobamovirus Ob protein is Replicase large subunit.